A 448-amino-acid chain; its full sequence is Probable glycine dehydrogenase (decarboxylating) subunit 1 (448 aa).

The protein belongs to the GcvP family. N-terminal subunit subfamily. As to quaternary structure, the glycine cleavage system is composed of four proteins: P, T, L and H. In this organism, the P 'protein' is a heterodimer of two subunits.

The catalysed reaction is N(6)-[(R)-lipoyl]-L-lysyl-[glycine-cleavage complex H protein] + glycine + H(+) = N(6)-[(R)-S(8)-aminomethyldihydrolipoyl]-L-lysyl-[glycine-cleavage complex H protein] + CO2. Its function is as follows. The glycine cleavage system catalyzes the degradation of glycine. The P protein binds the alpha-amino group of glycine through its pyridoxal phosphate cofactor; CO(2) is released and the remaining methylamine moiety is then transferred to the lipoamide cofactor of the H protein. The polypeptide is Probable glycine dehydrogenase (decarboxylating) subunit 1 (Geobacillus thermodenitrificans (strain NG80-2)).